A 292-amino-acid chain; its full sequence is ATP synthase gamma chain (292 aa).

It belongs to the ATPase gamma chain family. In terms of assembly, F-type ATPases have 2 components, CF(1) - the catalytic core - and CF(0) - the membrane proton channel. CF(1) has five subunits: alpha(3), beta(3), gamma(1), delta(1), epsilon(1). CF(0) has three main subunits: a, b and c.

Its subcellular location is the cell inner membrane. Produces ATP from ADP in the presence of a proton gradient across the membrane. The gamma chain is believed to be important in regulating ATPase activity and the flow of protons through the CF(0) complex. The chain is ATP synthase gamma chain from Maridesulfovibrio salexigens (strain ATCC 14822 / DSM 2638 / NCIMB 8403 / VKM B-1763) (Desulfovibrio salexigens).